The sequence spans 132 residues: Small ribosomal subunit protein uS8 (132 aa).

This sequence belongs to the universal ribosomal protein uS8 family. Part of the 30S ribosomal subunit. Contacts proteins S5 and S12.

Its function is as follows. One of the primary rRNA binding proteins, it binds directly to 16S rRNA central domain where it helps coordinate assembly of the platform of the 30S subunit. The polypeptide is Small ribosomal subunit protein uS8 (Mycoplasmopsis pulmonis (strain UAB CTIP) (Mycoplasma pulmonis)).